Here is a 147-residue protein sequence, read N- to C-terminus: Large ribosomal subunit protein uL13 (147 aa).

This sequence belongs to the universal ribosomal protein uL13 family. As to quaternary structure, part of the 50S ribosomal subunit.

This protein is one of the early assembly proteins of the 50S ribosomal subunit, although it is not seen to bind rRNA by itself. It is important during the early stages of 50S assembly. The chain is Large ribosomal subunit protein uL13 from Mycobacteroides abscessus (strain ATCC 19977 / DSM 44196 / CCUG 20993 / CIP 104536 / JCM 13569 / NCTC 13031 / TMC 1543 / L948) (Mycobacterium abscessus).